Here is a 70-residue protein sequence, read N- to C-terminus: DNA-directed RNA polymerase subunit omega (70 aa).

This sequence belongs to the RNA polymerase subunit omega family. The RNAP catalytic core consists of 2 alpha, 1 beta, 1 beta' and 1 omega subunit. When a sigma factor is associated with the core the holoenzyme is formed, which can initiate transcription.

The enzyme catalyses RNA(n) + a ribonucleoside 5'-triphosphate = RNA(n+1) + diphosphate. Its function is as follows. Promotes RNA polymerase assembly. Latches the N- and C-terminal regions of the beta' subunit thereby facilitating its interaction with the beta and alpha subunits. In Thermoanaerobacter sp. (strain X514), this protein is DNA-directed RNA polymerase subunit omega.